The primary structure comprises 560 residues: Membrane protein insertase YidC (560 aa).

Helical transmembrane passes span 5 to 25, 334 to 354, 357 to 377, 431 to 451, 476 to 496, and 522 to 542; these read IINL…WQYF, AIDF…MNFF, YVGN…LLMF, LPIL…YVTI, LFGL…WPIL, and FMPL…LIYW.

Belongs to the OXA1/ALB3/YidC family. Type 1 subfamily. Interacts with the Sec translocase complex via SecD. Specifically interacts with transmembrane segments of nascent integral membrane proteins during membrane integration.

The protein resides in the cell inner membrane. Its function is as follows. Required for the insertion and/or proper folding and/or complex formation of integral membrane proteins into the membrane. Involved in integration of membrane proteins that insert both dependently and independently of the Sec translocase complex, as well as at least some lipoproteins. Aids folding of multispanning membrane proteins. This Rickettsia akari (strain Hartford) protein is Membrane protein insertase YidC.